A 351-amino-acid chain; its full sequence is Transmembrane and coiled-coil domain-containing protein 5B (351 aa).

Residues 17–214 (EIPKLEITKQ…WRSSIQSAKT (198 aa)) are a coiled coil. Residues 292-312 (IFVVMIFFRLLGYVLFYLQYI) traverse the membrane as a helical segment.

The protein belongs to the TMCO5 family.

It is found in the membrane. This chain is Transmembrane and coiled-coil domain-containing protein 5B (TMCO5B), found in Bos taurus (Bovine).